We begin with the raw amino-acid sequence, 399 residues long: Dof zinc finger protein DOF5.1 (399 aa).

The Dof-type zinc-finger motif lies at 95-149 (LKCPRCDSTNTKFCYFNNYSLTQPRHFCKACRRYWTRGGALRSVPVGGGCRRNKR). Cysteine 97, cysteine 100, cysteine 122, and cysteine 125 together coordinate Zn(2+). The segment at 139–176 (PVGGGCRRNKRTKNSSGGGGGSTSSGNSKSQDSATSND) is disordered.

Expressed ubiquitously, especially in the vascular tissues, except in seeds, petals and anthers. Specific to the vascular tissues in young leaves, cotyledons and flower buds. The PEAR proteins (e.g. DOF2.4, DOF5.1, DOF3.2, DOF1.1, DOF5.6 and DOF5.3) form a short-range concentration gradient that peaks at protophloem sieve elements (PSE).

Its subcellular location is the nucleus. Its function is as follows. Transcription factor that binds specifically to a 5'-AA[AG]G-3' consensus core sequence. Binds to 5'-TAAAGT-3' motif in REV promoter to triggers its transcription, thus regulating adaxial-abaxial polarity and influencing leaf axial patterning in an auxin transport- and response-dependent manner (e.g. IAA6 and IAA19 genes expression). Probably involved in early processes for vascular development. The PEAR proteins (e.g. DOF2.4, DOF5.1, DOF3.2, DOF1.1, DOF5.6 and DOF5.3) activate gene expression that promotes radial growth of protophloem sieve elements. The protein is Dof zinc finger protein DOF5.1 of Arabidopsis thaliana (Mouse-ear cress).